The primary structure comprises 41 residues: MKVRSSLKSLKTRHRDCKLVRRKGRVYVINKTDPRFKAKQG.

It belongs to the bacterial ribosomal protein bL36 family.

In Phenylobacterium zucineum (strain HLK1), this protein is Large ribosomal subunit protein bL36.